We begin with the raw amino-acid sequence, 431 residues long: E3 ubiquitin-protein ligase marc-3 (431 aa).

Residues 5 to 74 (NASLGPAVCR…EICKFAFKIK (70 aa)) form an RING-CH-type zinc finger. The Zn(2+) site is built by Cys-13, Cys-16, Cys-38, Cys-40, His-48, Cys-51, Cys-64, and Cys-67. 2 consecutive transmembrane segments (helical) span residues 98-118 (PFID…GVFM) and 157-177 (LFLF…VSAL). Disordered regions lie at residues 267–289 (TSPD…FGRR) and 327–349 (SRAT…RDMR). Basic and acidic residues predominate over residues 273–282 (NTHHHDESRN).

The protein resides in the cell membrane. It localises to the endosome membrane. The catalysed reaction is S-ubiquitinyl-[E2 ubiquitin-conjugating enzyme]-L-cysteine + [acceptor protein]-L-lysine = [E2 ubiquitin-conjugating enzyme]-L-cysteine + N(6)-ubiquitinyl-[acceptor protein]-L-lysine.. The protein operates within protein modification; protein ubiquitination. E3 ubiquitin-protein ligase which positively regulates the fast polyspermy block during fertilization, preventing entry of more than one sperm into the oocyte. After fertilization, required in the zygote for the selective degradation of a subset of maternal membrane proteins including cav-1, chs-1 and rme-2, probably by mediating their K63-linked polyubiquitination. This Caenorhabditis elegans protein is E3 ubiquitin-protein ligase marc-3.